We begin with the raw amino-acid sequence, 430 residues long: Glutamate-1-semialdehyde 2,1-aminomutase (430 aa).

N6-(pyridoxal phosphate)lysine is present on Lys269.

The protein belongs to the class-III pyridoxal-phosphate-dependent aminotransferase family. HemL subfamily. In terms of assembly, homodimer. The cofactor is pyridoxal 5'-phosphate.

It is found in the cytoplasm. The catalysed reaction is (S)-4-amino-5-oxopentanoate = 5-aminolevulinate. It participates in porphyrin-containing compound metabolism; protoporphyrin-IX biosynthesis; 5-aminolevulinate from L-glutamyl-tRNA(Glu): step 2/2. The protein is Glutamate-1-semialdehyde 2,1-aminomutase of Desulfitobacterium hafniense (strain DSM 10664 / DCB-2).